The sequence spans 439 residues: Ectonucleotide pyrophosphatase/phosphodiesterase family member 7 (439 aa).

Positions 1-21 (MGHSAVLLSVALVILPACVTG) are cleaved as a signal peptide. The Extracellular portion of the chain corresponds to 22-422 (GPVQRQQQHK…RSGSPLSRQH (401 aa)). Zn(2+) contacts are provided by Asp-38 and Thr-74. A required for enzyme activity region spans residues 71 to 77 (VTMTSPC). Thr-74 functions as the Nucleophile in the catalytic mechanism. Substrate is bound at residue Asn-95. Residues Asn-99, Asn-120, Asn-145, and Asn-167 are each glycosylated (N-linked (GlcNAc...) asparagine). Zn(2+) contacts are provided by Asp-198, His-202, Asp-245, and His-246. The N-linked (GlcNAc...) asparagine glycan is linked to Asn-266. Zn(2+) is bound at residue His-352. Residues 423–439 (HLVVVLMGILTGLAKVV) traverse the membrane as a helical segment.

This sequence belongs to the nucleotide pyrophosphatase/phosphodiesterase family. Zn(2+) is required as a cofactor. In terms of processing, N-glycosylated; required for activity and transport to the plasma membrane. In terms of tissue distribution, detected in small intestine (at protein level). Highly expressed in the jejunum.

It is found in the cell membrane. The catalysed reaction is a sphingomyelin + H2O = phosphocholine + an N-acylsphing-4-enine + H(+). It catalyses the reaction a 1-O-alkyl-2-acetyl-sn-glycero-3-phosphocholine + H2O = a 1-O-alkyl-2-acetyl-sn-glycerol + phosphocholine + H(+). The enzyme catalyses 1-O-octadecyl-2-acetyl-sn-glycero-3-phosphocholine + H2O = 1-O-octadecyl-2-acetyl-sn-glycerol + phosphocholine + H(+). It carries out the reaction 1-hexadecanoyl-sn-glycero-3-phosphocholine + H2O = 1-hexadecanoyl-sn-glycerol + phosphocholine + H(+). With respect to regulation, platelet-activating factor hydrolysis is inhibited by higher amount of sphingomyelin. The hydrolysis of platelet-activating factor and sphingomyelin can be inhibited by the presence of sphingomyelin and platelet-activating factor respectively, the inhibition of platelet-activating factor hydrolysis by sphingomyelin being stronger. PAF hydrolysis is dose-dependently increased by both taurocholate (TC) and taurodeoxycholate (TDC). Hydrolase activity against PAF is inhibited by EDTA and stimulated by 0.1-0.25 mM Zn2+. Functionally, choline-specific phosphodiesterase that hydrolyzes sphingomyelin (SM) releasing the ceramide and phosphocholine and therefore is involved in sphingomyelin digestion, ceramide formation, and fatty acid (FA) absorption in the gastrointestinal tract. Also has phospholipase C activity and can also cleave phosphocholine from palmitoyl lyso-phosphatidylcholine and platelet-activating factor (PAF) leading to its inactivation. Does not have nucleotide pyrophosphatase activity. May promote cholesterol absorption by affecting the levels of sphingomyelin derived from either diet or endogenous sources, in the intestinal lumen. This chain is Ectonucleotide pyrophosphatase/phosphodiesterase family member 7, found in Rattus norvegicus (Rat).